A 489-amino-acid chain; its full sequence is Envelope glycoprotein C homolog (489 aa).

Residues 1 to 32 (MVSNMRVLRVLRLTGWVGIFLVLSLQQTSCAG) form the signal peptide. Residues 33 to 455 (LPHNVDTHHI…YYDATPSARG (423 aa)) lie on the Virion surface side of the membrane. The segment at 59–94 (EVPNSPTTELSTTVATKTAVPTTESTSSSEAHRNSS) is disordered. Over residues 60-69 (VPNSPTTELS) the composition is skewed to polar residues. Positions 70–81 (TTVATKTAVPTT) are enriched in low complexity. Asn-92, Asn-112, Asn-204, Asn-346, and Asn-392 each carry an N-linked (GlcNAc...) asparagine; by host glycan. The 99-residue stretch at 250–348 (PASVDVLAPP…GDMISTSNAT (99 aa)) folds into the Ig-like domain. A helical membrane pass occupies residues 456–486 (MPMIVTITAVLGLALFLGIGIIITALCFYLP). The Cytoplasmic portion of the chain corresponds to 487 to 489 (GRN).

This sequence belongs to the herpesviridae glycoprotein C family.

The protein resides in the virion membrane. The sequence is that of Envelope glycoprotein C homolog (gC) from Gallus gallus (Chicken).